The following is a 1557-amino-acid chain: Probable kinase PglW (1557 aa).

The NERD domain occupies 12–130; the sequence is SEFEHERRGL…VAEAVCFTDN (119 aa). Protein kinase domains follow at residues 195–490 and 530–816; these read ELER…LEVV and WEVR…KVFL. ATP contacts are provided by residues 536–544 and Lys564; that span reads LGTGSTSRA. Disordered stretches follow at residues 615–634 and 821–861; these read DERD…RRRE and TVPS…QRDR. A compositionally biased stretch (low complexity) spans 830-849; sequence PAAPADGAAPAEGAAAGIAD.

It belongs to the protein kinase superfamily. Ser/Thr protein kinase family.

In terms of biological role, BREX systems (bacteriophage exclusion) provide immunity against bacteriophage. Part of a type 2 BREX system. Previously called the phage growth limitation (Pgl) system, it confers protection against bacteriophage phiC31. The bacteria allows one cycle of phage infection, but subsequent cycles are impaired, protecting the original bacterial colony. The system undergoes high rates (10(-3) to 10(-4)) of phase reversion, i.e. loss and regain of phiC31 resistance. When the pglW-pglX-pglY-pglZ genes are transformed into a susceptible S.lividans (strain 1326) they confer resistance to infection by phage phiC31 and phiBT1; all 4 genes are necessary. The proteins has kinase domains and might bind DNA. Its function is as follows. Autophosphorylates when synthesized in vitro, cannot be expressed in E.coli. The polypeptide is Probable kinase PglW (Streptomyces coelicolor (strain ATCC BAA-471 / A3(2) / M145)).